The sequence spans 117 residues: UPF0102 protein Ssed_4252 (117 aa).

This sequence belongs to the UPF0102 family.

This is UPF0102 protein Ssed_4252 from Shewanella sediminis (strain HAW-EB3).